The sequence spans 126 residues: Protein ApaG (126 aa).

In terms of domain architecture, ApaG spans 2–126 (DVIQPCIKIQ…FRLAIPNVLN (125 aa)).

The polypeptide is Protein ApaG (Vibrio campbellii (strain ATCC BAA-1116)).